The sequence spans 115 residues: Disintegrin EC6 subunit alpha (115 aa).

The first 20 residues, 1 to 20, serve as a signal peptide directing secretion; sequence MIQVLLVIICLAVFPYQGSS. The propeptide occupies 21–47; it reads IILESGNINDYEIVYPKKVAVLPTGAM. The region spanning 48–112 is the Disintegrin domain; that stretch reads NSVHPCCDPV…DCPRNRYKGK (65 aa). 4 disulfide bridges follow: Cys-53/Cys-76, Cys-67/Cys-73, Cys-72/Cys-97, and Cys-85/Cys-104. The short motif at 89–91 is the Cell attachment site; atypical (MLD) element; it reads MLD.

It belongs to the disintegrin family. Dimeric disintegrin subfamily. Heterodimer with subunit beta; disulfide-linked. In terms of tissue distribution, expressed by the venom gland.

It is found in the secreted. Its function is as follows. Potently inhibits adhesion of alpha-4/beta-1 (ITGA4/ITGB1) and alpha-9/beta-1 (ITGA9/ITGB1) integrins to VCAM1, and adhesion of alpha-5/beta-1 (ITGA5/ITGB1) integrin to fibronectin. Has a much less effect on alpha-IIb/beta-3 (ITGA2B/ITGB3) integrin. Also potently inhibits neutrophil migration across TNF-alpha-activated human umbilical endothelial cells. This chain is Disintegrin EC6 subunit alpha, found in Echis carinatus sochureki (Saw-scaled viper).